The primary structure comprises 359 residues: Probable dual-specificity RNA methyltransferase RlmN (359 aa).

Glu-91 (proton acceptor) is an active-site residue. The 233-residue stretch at 97-329 (QHYGHSVCVT…KKNGVNCVVR (233 aa)) folds into the Radical SAM core domain. A disulfide bridge connects residues Cys-104 and Cys-340. [4Fe-4S] cluster-binding residues include Cys-111, Cys-115, and Cys-118. S-adenosyl-L-methionine is bound by residues 163 to 164 (GE), Ser-195, 218 to 220 (SLH), and Asn-296. Cys-340 functions as the S-methylcysteine intermediate in the catalytic mechanism.

The protein belongs to the radical SAM superfamily. RlmN family. Requires [4Fe-4S] cluster as cofactor.

The protein resides in the cytoplasm. The catalysed reaction is adenosine(2503) in 23S rRNA + 2 reduced [2Fe-2S]-[ferredoxin] + 2 S-adenosyl-L-methionine = 2-methyladenosine(2503) in 23S rRNA + 5'-deoxyadenosine + L-methionine + 2 oxidized [2Fe-2S]-[ferredoxin] + S-adenosyl-L-homocysteine. It catalyses the reaction adenosine(37) in tRNA + 2 reduced [2Fe-2S]-[ferredoxin] + 2 S-adenosyl-L-methionine = 2-methyladenosine(37) in tRNA + 5'-deoxyadenosine + L-methionine + 2 oxidized [2Fe-2S]-[ferredoxin] + S-adenosyl-L-homocysteine. Functionally, specifically methylates position 2 of adenine 2503 in 23S rRNA and position 2 of adenine 37 in tRNAs. The protein is Probable dual-specificity RNA methyltransferase RlmN of Streptococcus pyogenes serotype M18 (strain MGAS8232).